A 105-amino-acid polypeptide reads, in one-letter code: Integration host factor subunit alpha (105 aa).

The protein belongs to the bacterial histone-like protein family. As to quaternary structure, heterodimer of an alpha and a beta chain.

Functionally, this protein is one of the two subunits of integration host factor, a specific DNA-binding protein that functions in genetic recombination as well as in transcriptional and translational control. The protein is Integration host factor subunit alpha of Azorhizobium caulinodans (strain ATCC 43989 / DSM 5975 / JCM 20966 / LMG 6465 / NBRC 14845 / NCIMB 13405 / ORS 571).